The sequence spans 395 residues: Protein phosphatase PP2A regulatory subunit A (395 aa).

8 HEAT repeats span residues 44 to 81 (DCLA…AVGP), 83 to 120 (STKT…ILSP), 122 to 159 (LAIQ…VLGK), 161 to 198 (ATIE…VIGI), 200 to 237 (LLSQ…QLGV), 239 to 276 (FFDD…EEFG), 279 to 316 (WAMQ…VLGS), and 318 to 355 (ITST…IVDE).

This sequence belongs to the phosphatase 2A regulatory subunit A family. As to quaternary structure, PP2A exists in several trimeric forms, all of which consist of a core composed of a catalytic subunit associated with a 65 kDa regulatory subunit (PR65) (subunit A). The core complex associates with a third, variable subunit (subunit B), which confers distinct properties to the holoenzyme.

Functionally, the PR65 subunit of protein phosphatase 2A serves as a scaffolding molecule to coordinate the assembly of the catalytic subunit and a variable regulatory B subunit. The sequence is that of Protein phosphatase PP2A regulatory subunit A from Pisum sativum (Garden pea).